Here is a 429-residue protein sequence, read N- to C-terminus: MKGTIFAVALNHRSQLDAWQEAFQQSPYKAPPKTAVWFIKPRNTVIGCGEPIPFPQGEKVLSGATVALIVGKTATKVREEDAAEYIAGYALANDVSLPEESFYRPAIKAKCRDGFCPIGETVALSNVDNLTIYTEINGRPADHWNTADLQRNAAQLLSALSEFATLNPGDAILLGTPQARVEIQPGDRVRVLAEGFPPLENPVVDEREVTTRKSFPTLPHPHGTLFALGLNYADHASELEFKPPEEPLVFLKAPNTLTGDNQTSVRPNNIEYMHYEAELVVVIGKQARNVSEADAMDYVAGYTVCNDYAIRDYLENYYRPNLRVKSRDGLTPMLSTIVPKEAIPDPHNLTLRTFVNGELRQQGTTADLIFSVPFLIAYLSEFMTLNPGDMIATGTPKGLSDVVPGDEVVVEVEGVGRLVNRIVSEETAK.

Approximate repeat units lie at residues 1 to 215 (MKGT…RKSF) and 216 to 429 (PTLP…ETAK). Positions 276, 278, and 307 each coordinate a divalent metal cation.

It belongs to the FAH family. In terms of assembly, monomer. It depends on Mg(2+) as a cofactor.

The catalysed reaction is (2E,4Z)-5-hydroxypenta-2,4-diene-1,2,5-tricarboxylate = (3E,5R)-5-carboxy-2-oxohept-3-enedioate. It catalyses the reaction (3E,5R)-5-carboxy-2-oxohept-3-enedioate + H(+) = (4Z)-2-oxohept-4-enedioate + CO2. It participates in aromatic compound metabolism; 4-hydroxyphenylacetate degradation; pyruvate and succinate semialdehyde from 4-hydroxyphenylacetate: step 4/7. The protein operates within aromatic compound metabolism; 4-hydroxyphenylacetate degradation; pyruvate and succinate semialdehyde from 4-hydroxyphenylacetate: step 5/7. Its function is as follows. Decarboxylates OPET (5-oxo-pent-3-ene-1,2,5-tricarboxylic acid) into HHDD (2-hydroxy-hept-2,4-diene-1,7-dioate) and isomerizes it to OHED (2-oxo-hept-3-ene-1,7-dioate). This Escherichia coli protein is 4-hydroxyphenylacetate degradation bifunctional isomerase/decarboxylase (hpaG).